A 1035-amino-acid chain; its full sequence is Sialidase A (1035 aa).

The signal sequence occupies residues 1 to 53; sequence MSYFRNRDIDIERNSMNRSVQERKCRYSIRKLSVGAVSMIVGAVVFGTSPVLA. Positions 57–112 are disordered; that stretch reads ASEQPLANETQLSGESSTLTDTEKSQPSSETELSGNKQEQERKDKQEEKIPRDYYA. The span at 61 to 92 shows a compositional bias: polar residues; it reads PLANETQLSGESSTLTDTEKSQPSSETELSGN. The segment covering 94–112 has biased composition (basic and acidic residues); sequence QEQERKDKQEEKIPRDYYA. Arg-347 is a binding site for substrate. Asp-372 (proton acceptor) is an active-site residue. BNR repeat units lie at residues 381–392, 539–550, and 607–618; these read RRSEDNGKTWGD, SYSDDDGKTWSA, and IYSDDHGKTWHA. The active site involves Glu-647. Arg-663 is a substrate binding site. Residues 672 to 683 form a BNR 4 repeat; it reads ATSKDGGVTWEK. The interval 902-951 is disordered; it reads GPLGTSGEEPAPTVEKPEYTGPLGTSGEEPAPTVEKPEYTGPLGTAGEEA. The short motif at 1003–1007 is the LPXTG sorting signal element; the sequence is LPETG. Thr-1006 is modified (pentaglycyl murein peptidoglycan amidated threonine). Residues 1007-1035 constitute a propeptide, removed by sortase; it reads GNKESDLLASLGLTAFFLGLFTLGKKREQ.

This sequence belongs to the glycosyl hydrolase 33 family.

The protein localises to the secreted. Its subcellular location is the cell wall. It catalyses the reaction Hydrolysis of alpha-(2-&gt;3)-, alpha-(2-&gt;6)-, alpha-(2-&gt;8)- glycosidic linkages of terminal sialic acid residues in oligosaccharides, glycoproteins, glycolipids, colominic acid and synthetic substrates.. In Streptococcus pneumoniae, this protein is Sialidase A (nanA).